Consider the following 447-residue polypeptide: GTPase Der (447 aa).

EngA-type G domains follow at residues 4-165 and 180-357; these read QIIT…PEEE and LQIV…KIWN. GTP is bound by residues 10-17, 57-61, 119-122, 186-193, 233-237, and 298-301; these read GRPNVGKS, DTPGL, NKCE, GRPNAGKS, DTAGL, and NKWD. Residues 358–443 enclose the KH-like domain; it reads KKITTSKLNE…PIRFIYVKTK (86 aa).

It belongs to the TRAFAC class TrmE-Era-EngA-EngB-Septin-like GTPase superfamily. EngA (Der) GTPase family. In terms of assembly, associates with the 50S ribosomal subunit.

Its function is as follows. GTPase that plays an essential role in the late steps of ribosome biogenesis. The protein is GTPase Der of Rickettsia africae (strain ESF-5).